The following is a 50-amino-acid chain: Protein hunchback (50 aa).

C2H2-type zinc fingers lie at residues 1–5 (HLRNH), 11–33 (FKCGKCNYSCANKSMLNSHMKSH), and 39–50 (YRCANCCYATKY).

This sequence belongs to the hunchback C2H2-type zinc-finger protein family.

It is found in the nucleus. Gap class segmentation protein that controls development of head structures. The protein is Protein hunchback (hb) of Pholcus phalangioides (Longbodied cellar spider).